The chain runs to 238 residues: uncharacterized protein (238 aa).

The signal sequence occupies residues 1-20 (MNNVKLLIAGSAFFAMSAQA).

To E.coli GltF.

This is an uncharacterized protein from Escherichia coli (strain K12).